We begin with the raw amino-acid sequence, 179 residues long: ATP synthase subunit delta (179 aa).

The protein belongs to the ATPase delta chain family. F-type ATPases have 2 components, F(1) - the catalytic core - and F(0) - the membrane proton channel. F(1) has five subunits: alpha(3), beta(3), gamma(1), delta(1), epsilon(1). F(0) has three main subunits: a(1), b(2) and c(10-14). The alpha and beta chains form an alternating ring which encloses part of the gamma chain. F(1) is attached to F(0) by a central stalk formed by the gamma and epsilon chains, while a peripheral stalk is formed by the delta and b chains.

It localises to the cell inner membrane. In terms of biological role, f(1)F(0) ATP synthase produces ATP from ADP in the presence of a proton or sodium gradient. F-type ATPases consist of two structural domains, F(1) containing the extramembraneous catalytic core and F(0) containing the membrane proton channel, linked together by a central stalk and a peripheral stalk. During catalysis, ATP synthesis in the catalytic domain of F(1) is coupled via a rotary mechanism of the central stalk subunits to proton translocation. Its function is as follows. This protein is part of the stalk that links CF(0) to CF(1). It either transmits conformational changes from CF(0) to CF(1) or is implicated in proton conduction. In Delftia acidovorans (strain DSM 14801 / SPH-1), this protein is ATP synthase subunit delta.